The chain runs to 276 residues: Mitochondrial outer membrane protein porin 6 (276 aa).

It belongs to the eukaryotic mitochondrial porin (TC 1.B.8.1) family.

The protein localises to the mitochondrion outer membrane. Functionally, forms a channel through the mitochondrial outer membrane that allows diffusion of small hydrophilic molecules. The channel adopts an open conformation at low or zero membrane potential and a closed conformation at potentials above 30-40 mV. The open state has a weak anion selectivity whereas the closed state is cation-selective. In Oryza sativa subsp. japonica (Rice), this protein is Mitochondrial outer membrane protein porin 6 (VDAC6).